A 99-amino-acid polypeptide reads, in one-letter code: Beta-defensin 127 (99 aa).

Positions 1 to 20 (MGLFMIIAILLFQKPTVTEQ) are cleaved as a signal peptide. 3 disulfide bridges follow: Cys-24/Cys-53, Cys-33/Cys-47, and Cys-37/Cys-54. Residues 66-99 (ITKPSHPKPATLALTLQDYVTIIENFPSLKTQST) constitute a propeptide that is removed on maturation.

This sequence belongs to the beta-defensin family.

Its subcellular location is the secreted. Has antibacterial activity. The chain is Beta-defensin 127 (DEFB127) from Pan troglodytes (Chimpanzee).